Consider the following 446-residue polypeptide: D(3) dopamine receptor (446 aa).

Residues methionine 1 to tyrosine 32 lie on the Extracellular side of the membrane. Asparagine 12 and asparagine 19 each carry an N-linked (GlcNAc...) asparagine glycan. A helical membrane pass occupies residues alanine 33–leucine 55. Residues arginine 56–asparagine 65 lie on the Cytoplasmic side of the membrane. Residues tyrosine 66–tyrosine 88 traverse the membrane as a helical segment. The Extracellular portion of the chain corresponds to leucine 89–aspartate 104. Asparagine 97 carries N-linked (GlcNAc...) asparagine glycosylation. A disulfide bridge connects residues cysteine 103 and cysteine 181. Residues valine 105–isoleucine 126 form a helical membrane-spanning segment. Residues aspartate 127–arginine 149 lie on the Cytoplasmic side of the membrane. A helical transmembrane segment spans residues valine 150 to phenylalanine 170. The Extracellular portion of the chain corresponds to glycine 171–aspartate 187. An N-linked (GlcNAc...) asparagine glycan is attached at asparagine 173. The helical transmembrane segment at phenylalanine 188–alanine 209 threads the bilayer. At arginine 210–glutamine 375 the chain is on the cytoplasmic side. Residues methionine 376–leucine 397 form a helical membrane-spanning segment. Over asparagine 398–arginine 412 the chain is Extracellular. Cysteines 401 and 404 form a disulfide. A helical transmembrane segment spans residues alanine 413–phenylalanine 432. Topologically, residues asparagine 433 to cysteine 446 are cytoplasmic.

This sequence belongs to the G-protein coupled receptor 1 family. Interacts with CLIC6. Interacts with GRK4. Interacts with PALM. Interacts with FLNA (via filamin repeat 21); increases PKA-mediated phosphorylation of FLNA. Post-translationally, phosphorylated by GRK4. Palmitoylated.

The protein resides in the cell membrane. In terms of biological role, dopamine receptor whose activity is mediated by G proteins which inhibit adenylyl cyclase. Promotes cell proliferation. The protein is D(3) dopamine receptor (Drd3) of Mus musculus (Mouse).